The primary structure comprises 363 residues: Probable iron/ascorbate oxidoreductase DDB_G0283291 (363 aa).

The 110-residue stretch at 197-306 (IFNYPSIISS…RISFPLFFDP (110 aa)) folds into the Fe2OG dioxygenase domain. Fe cation contacts are provided by H230, D232, and H286. 2-oxoglutarate is bound at residue R297.

It belongs to the iron/ascorbate-dependent oxidoreductase family. Requires Fe(2+) as cofactor.

In Dictyostelium discoideum (Social amoeba), this protein is Probable iron/ascorbate oxidoreductase DDB_G0283291.